Consider the following 185-residue polypeptide: Threonylcarbamoyl-AMP synthase (185 aa).

Residues 4-185 (SFRAQCAARV…LVTGQVIRPA (182 aa)) form the YrdC-like domain.

This sequence belongs to the SUA5 family. TsaC subfamily.

Its subcellular location is the cytoplasm. It catalyses the reaction L-threonine + hydrogencarbonate + ATP = L-threonylcarbamoyladenylate + diphosphate + H2O. In terms of biological role, required for the formation of a threonylcarbamoyl group on adenosine at position 37 (t(6)A37) in tRNAs that read codons beginning with adenine. Catalyzes the conversion of L-threonine, HCO(3)(-)/CO(2) and ATP to give threonylcarbamoyl-AMP (TC-AMP) as the acyladenylate intermediate, with the release of diphosphate. The protein is Threonylcarbamoyl-AMP synthase of Pseudomonas paraeruginosa (strain DSM 24068 / PA7) (Pseudomonas aeruginosa (strain PA7)).